Consider the following 404-residue polypeptide: WD repeat and SOCS box-containing protein 2 (404 aa).

WD repeat units follow at residues 105-148, 151-191, 195-234, 237-276, and 291-330; these read PPSR…LLLN, GHQD…KQIQ, GHLQWVYCCSISPDCSMLCSAAGEKSVFLWSMRSYTLIRK, GHQSSVVSCDFSPDSALLVTASYDTSVIMWDPYTGERLRS, and VHMSSLRSVCFSPEGLYLATVADDRLLRIWALELKAPVAF. The SOCS box domain occupies 356–404; that stretch reads HVQFWTAPRVLSSLKHLCRKALRSFLTTYQVLALPIPKKMKEFLTYRTF.

It participates in protein modification; protein ubiquitination. Its function is as follows. May be a substrate-recognition component of a SCF-like ECS (Elongin-Cullin-SOCS-box protein) E3 ubiquitin ligase complex which mediates the ubiquitination and subsequent proteasomal degradation of target proteins. This is WD repeat and SOCS box-containing protein 2 (Wsb2) from Mus musculus (Mouse).